Reading from the N-terminus, the 792-residue chain is Phenylalanine--tRNA ligase beta subunit (792 aa).

In terms of domain architecture, tRNA-binding spans 38–148 (NTKLAGFIVA…DDYKVGNKFF (111 aa)). Positions 406 to 482 (EADTKVSFDY…RIYGYDKIKE (77 aa)) constitute a B5 domain. Mg(2+) contacts are provided by D460, D466, E469, and E470. The FDX-ACB domain occupies 698–790 (YKHQSVKRDF…VHKNTGGILR (93 aa)).

It belongs to the phenylalanyl-tRNA synthetase beta subunit family. Type 1 subfamily. In terms of assembly, tetramer of two alpha and two beta subunits. The cofactor is Mg(2+).

It is found in the cytoplasm. The catalysed reaction is tRNA(Phe) + L-phenylalanine + ATP = L-phenylalanyl-tRNA(Phe) + AMP + diphosphate + H(+). In Wolbachia sp. subsp. Brugia malayi (strain TRS), this protein is Phenylalanine--tRNA ligase beta subunit.